The primary structure comprises 424 residues: Tyrosine--tRNA ligase (424 aa).

Y37 provides a ligand contact to L-tyrosine. The 'HIGH' region motif lies at 42–51; the sequence is PTADSLHIGS. Residues Y174 and Q178 each contribute to the L-tyrosine site. The short motif at 234–238 is the 'KMSKS' region element; sequence KFGKT. An ATP-binding site is contributed by K237. The 66-residue stretch at 357–422 folds into the S4 RNA-binding domain; that stretch reads SGLIDALAAG…RGKKLYALVD (66 aa).

It belongs to the class-I aminoacyl-tRNA synthetase family. TyrS type 1 subfamily. In terms of assembly, homodimer.

Its subcellular location is the cytoplasm. It catalyses the reaction tRNA(Tyr) + L-tyrosine + ATP = L-tyrosyl-tRNA(Tyr) + AMP + diphosphate + H(+). Functionally, catalyzes the attachment of tyrosine to tRNA(Tyr) in a two-step reaction: tyrosine is first activated by ATP to form Tyr-AMP and then transferred to the acceptor end of tRNA(Tyr). In Chromobacterium violaceum (strain ATCC 12472 / DSM 30191 / JCM 1249 / CCUG 213 / NBRC 12614 / NCIMB 9131 / NCTC 9757 / MK), this protein is Tyrosine--tRNA ligase.